The primary structure comprises 360 residues: Phospho-N-acetylmuramoyl-pentapeptide-transferase (360 aa).

Transmembrane regions (helical) follow at residues 21–41 (YVTF…LWWG), 74–94 (MGGI…GDLA), 97–117 (YVWV…IDDY), 135–155 (ILQS…ADLV), 168–188 (IMPQ…VGSS), 199–219 (GLAI…AYLS), 236–256 (AGEL…FLWF), 263–283 (VFMG…IAVL), 288–308 (ILLV…ILQV), and 338–358 (VIVR…ATLK).

Belongs to the glycosyltransferase 4 family. MraY subfamily. Mg(2+) serves as cofactor.

Its subcellular location is the cell inner membrane. It catalyses the reaction UDP-N-acetyl-alpha-D-muramoyl-L-alanyl-gamma-D-glutamyl-meso-2,6-diaminopimeloyl-D-alanyl-D-alanine + di-trans,octa-cis-undecaprenyl phosphate = di-trans,octa-cis-undecaprenyl diphospho-N-acetyl-alpha-D-muramoyl-L-alanyl-D-glutamyl-meso-2,6-diaminopimeloyl-D-alanyl-D-alanine + UMP. The protein operates within cell wall biogenesis; peptidoglycan biosynthesis. Catalyzes the initial step of the lipid cycle reactions in the biosynthesis of the cell wall peptidoglycan: transfers peptidoglycan precursor phospho-MurNAc-pentapeptide from UDP-MurNAc-pentapeptide onto the lipid carrier undecaprenyl phosphate, yielding undecaprenyl-pyrophosphoryl-MurNAc-pentapeptide, known as lipid I. The sequence is that of Phospho-N-acetylmuramoyl-pentapeptide-transferase from Shewanella sediminis (strain HAW-EB3).